The chain runs to 377 residues: WAT1-related protein At5g13670 (377 aa).

10 helical membrane passes run F9 to A29, V38 to L58, P64 to V84, T99 to F119, V136 to I156, I187 to L207, L214 to I234, L251 to A271, F279 to F299, and V303 to W323. EamA domains are found at residues L18–T149 and F194–L322.

It belongs to the drug/metabolite transporter (DMT) superfamily. Plant drug/metabolite exporter (P-DME) (TC 2.A.7.4) family.

It localises to the membrane. In Arabidopsis thaliana (Mouse-ear cress), this protein is WAT1-related protein At5g13670.